The primary structure comprises 204 residues: MSKVKVLNEKLEKASELELPANFADVNPHNLYLYVKSYLASLRANTANTKGRSEVSGGGKKPWRQKGRGGARAGSTRTNVWVGGAVAFGPTNNRNYFQKVNKKQKRLALEFALNEKAQNDKIFAVDSLEISSGKTKDAAKFIKNLGVRDALIVKNELDSATLLAYRNLNNCYVIDINELNAYLVAVYSAVIIETSALQSIVKEG.

Positions 49-75 are disordered; sequence TKGRSEVSGGGKKPWRQKGRGGARAGS.

Belongs to the universal ribosomal protein uL4 family. As to quaternary structure, part of the 50S ribosomal subunit.

One of the primary rRNA binding proteins, this protein initially binds near the 5'-end of the 23S rRNA. It is important during the early stages of 50S assembly. It makes multiple contacts with different domains of the 23S rRNA in the assembled 50S subunit and ribosome. Functionally, forms part of the polypeptide exit tunnel. In Campylobacter hominis (strain ATCC BAA-381 / DSM 21671 / CCUG 45161 / LMG 19568 / NCTC 13146 / CH001A), this protein is Large ribosomal subunit protein uL4.